Consider the following 278-residue polypeptide: Gamma carbonic anhydrase 2, mitochondrial (278 aa).

A mitochondrion-targeting transit peptide spans 1–43 (MGTLGRAIYTVGNWIRGTGQALDRVGSLLQGSHRIEEHLSRHR). Residues 86 to 88 (RGD) and 101 to 102 (QD) contribute to the substrate site. Zn(2+) is bound by residues His-107, His-130, and His-135. Asn-209 contacts substrate.

Belongs to the gamma-class carbonic anhydrase family. As to quaternary structure, homotrimer. Component of the mitochondrial oxidoreductase respiratory chain complex I; element of the extra matrix-exposed domain, which is attached to the membrane arm of this complex. Interacts with GAMMACAL1 and GAMMACAL2. The cofactor is Zn(2+). In terms of tissue distribution, constitutively expressed in roots and leaves, with higher levels in flowers, particularly in tapetal tissue of anthers, inflorescence (IM) and floral meristems (FM).

It is found in the mitochondrion membrane. Its function is as follows. Enzyme involved in the catabolism of H(2)CO(3) but that does not mediates the reversible hydration of carbon dioxide. Mediates complex I assembly in mitochondria and respiration. Binds HCO(3)-. Required for male fertility during anther development and dehiscence to regulate the secondary thickenings of the endothecial cell wall, probably by modulating H(2)O(2)-dependent lignin polymerization. This Arabidopsis thaliana (Mouse-ear cress) protein is Gamma carbonic anhydrase 2, mitochondrial (GAMMACA2).